Here is a 270-residue protein sequence, read N- to C-terminus: Phosphate import ATP-binding protein PstB 1 (270 aa).

The 242-residue stretch at 24–265 (LAVERLNLFY…PYQRQTEDYI (242 aa)) folds into the ABC transporter domain. 56–63 (GPSGCGKS) contacts ATP.

The protein belongs to the ABC transporter superfamily. Phosphate importer (TC 3.A.1.7) family. The complex is composed of two ATP-binding proteins (PstB), two transmembrane proteins (PstC and PstA) and a solute-binding protein (PstS).

It localises to the cell inner membrane. The catalysed reaction is phosphate(out) + ATP + H2O = ADP + 2 phosphate(in) + H(+). Functionally, part of the ABC transporter complex PstSACB involved in phosphate import. Responsible for energy coupling to the transport system. This Yersinia pestis bv. Antiqua (strain Antiqua) protein is Phosphate import ATP-binding protein PstB 1.